The sequence spans 222 residues: L-cystine transport system permease protein TcyL (222 aa).

Topologically, residues 1 to 22 (MQESIQLVIDSLPFLLKGAGYT) are periplasmic. One can recognise an ABC transmembrane type-1 domain in the interval 19-207 (AGYTLQLSIG…IMATVLSTLQ (189 aa)). The chain crosses the membrane as a helical span at residues 23 to 43 (LQLSIGGMFFGLLLGFILALM). At 44 to 64 (RLSPIWPVRWLARFYISIFRG) the chain is on the cytoplasmic side. A helical transmembrane segment spans residues 65 to 85 (TPLIAQLFMIYYGLPQFGIEL). Over 86-182 (DPIPSAMIGL…RQAQLITSRT (97 aa)) the chain is Periplasmic. The helical transmembrane segment at 183 to 203 (LEVFTMYLAASLIYWIMATVL) threads the bilayer. Over 204-222 (STLQNHFENQLNRQEREPK) the chain is Cytoplasmic.

Belongs to the binding-protein-dependent transport system permease family. HisMQ subfamily. The complex is composed of two ATP-binding proteins (TcyN), two transmembrane proteins (TcyL) and a solute-binding protein (TcyJ).

It is found in the cell inner membrane. Functionally, part of the ABC transporter complex TcyJLN involved in L-cystine import. Responsible for the translocation of the substrate across the membrane. This chain is L-cystine transport system permease protein TcyL, found in Escherichia coli O6:H1 (strain CFT073 / ATCC 700928 / UPEC).